The sequence spans 392 residues: MPIEEHIAREQERLRAKQRYRTLPETGARRGPYITVGGRELLNLSSNDYLGLGSEPKLLASWMAQVECGGADGRFAMTSSSSRLLTGNFPVGGELESAIAKAYGSEAALVFNSGYHANTGILPSLSTRHDLILSDRLNHASIIDGLRIAEAEYRRYRHADYDHLEELLASAAGKYRQVFIVTESVFSMDGDLADLRRLVDLKKRYGAMLIVDEAHGVGVYGQRGLGLCEALGVLENIDILIGTFGKALASTGAYAVMSGLFREYLVNTMRTLIFTTALPPMMLSWSLATFTRQLEMRREREHLLGLAARLRETLGDAGFETPGESHIVPVVLGEDRAAVAMAAALREAGYHALPVRPPTVPENSARLRLSLRADLAVEQIDALASTMQSLRS.

R21 contributes to the substrate binding site. Pyridoxal 5'-phosphate is bound at residue 114–115 (GY). Substrate is bound at residue H139. Pyridoxal 5'-phosphate contacts are provided by residues S187, 212–215 (DEAH), and 243–246 (TFGK). K246 is modified (N6-(pyridoxal phosphate)lysine). T359 is a binding site for substrate.

The protein belongs to the class-II pyridoxal-phosphate-dependent aminotransferase family. BioF subfamily. As to quaternary structure, homodimer. Requires pyridoxal 5'-phosphate as cofactor.

The enzyme catalyses 6-carboxyhexanoyl-[ACP] + L-alanine + H(+) = (8S)-8-amino-7-oxononanoate + holo-[ACP] + CO2. It functions in the pathway cofactor biosynthesis; biotin biosynthesis. In terms of biological role, catalyzes the decarboxylative condensation of pimeloyl-[acyl-carrier protein] and L-alanine to produce 8-amino-7-oxononanoate (AON), [acyl-carrier protein], and carbon dioxide. In Chlorobaculum parvum (strain DSM 263 / NCIMB 8327) (Chlorobium vibrioforme subsp. thiosulfatophilum), this protein is 8-amino-7-oxononanoate synthase.